Reading from the N-terminus, the 95-residue chain is Cytochrome b (95 aa).

Transmembrane regions (helical) follow at residues 1-16 (GLCL…FLAM), 40-61 (WLIR…YLHI), and 76-95 (WNIG…VGYV). His46 and His60 together coordinate heme b.

It belongs to the cytochrome b family. As to quaternary structure, the cytochrome bc1 complex contains 3 respiratory subunits (MT-CYB, CYC1 and UQCRFS1), 2 core proteins (UQCRC1 and UQCRC2) and probably 6 low-molecular weight proteins. The cofactor is heme b.

It is found in the mitochondrion inner membrane. Functionally, component of the ubiquinol-cytochrome c reductase complex (complex III or cytochrome b-c1 complex) that is part of the mitochondrial respiratory chain. The b-c1 complex mediates electron transfer from ubiquinol to cytochrome c. Contributes to the generation of a proton gradient across the mitochondrial membrane that is then used for ATP synthesis. This Gomphosus varius (Bird wrasse) protein is Cytochrome b (mt-cyb).